A 693-amino-acid chain; its full sequence is Translation factor GUF1 homolog, chloroplastic (693 aa).

Residues 1 to 51 constitute a chloroplast transit peptide; that stretch reads MATDLSSSSTLLLSRNCKTPPFYHTTNSLSLSKTHHLYASRNAVVSRLRLL. In terms of domain architecture, tr-type G spans 86–267; sequence SNIRNFCIIA…AIVERIPSPR (182 aa). GTP-binding positions include 95-102, 160-164, and 214-217; these read AHIDHGKS, DTPGH, and NKID.

This sequence belongs to the TRAFAC class translation factor GTPase superfamily. Classic translation factor GTPase family. LepA subfamily.

It localises to the plastid. The protein resides in the chloroplast. The catalysed reaction is GTP + H2O = GDP + phosphate + H(+). Functionally, promotes chloroplast protein synthesis. May act as a fidelity factor of the translation reaction, by catalyzing a one-codon backward translocation of tRNAs on improperly translocated ribosomes. The sequence is that of Translation factor GUF1 homolog, chloroplastic from Ricinus communis (Castor bean).